The following is a 457-amino-acid chain: Argininosuccinate lyase (457 aa).

This sequence belongs to the lyase 1 family. Argininosuccinate lyase subfamily.

It is found in the cytoplasm. The enzyme catalyses 2-(N(omega)-L-arginino)succinate = fumarate + L-arginine. Its pathway is amino-acid biosynthesis; L-arginine biosynthesis; L-arginine from L-ornithine and carbamoyl phosphate: step 3/3. The sequence is that of Argininosuccinate lyase from Haemophilus influenzae (strain PittGG).